The sequence spans 591 residues: Solute carrier family 40 member 2, chloroplastic (591 aa).

The N-terminal 66 residues, 1–66, are a transit peptide targeting the chloroplast; that stretch reads MGMVTATAAA…RCYITNVEVD (66 aa). Helical transmembrane passes span 159–179, 206–226, 242–262, 293–313, 318–338, 391–411, 419–439, 452–472, 482–502, 518–540, and 547–569; these read WPAALAILHPSLLPVAIVGFF, GLNAVQVATQLISAAMVIYAM, WFIALVAAGAIERLAGLALGV, LVCETVGASVFGLLLSKYHPV, IACGLMICSFPVLVVLGQLIN, VATVFLNFNVALAPGAIMTAL, PSIVGAFSGLCSIMGLVATFI, AGAAGLIVQASLLSVALVVYW, LLIFLAAIALSRLGHMSYDVV, LIGGMEVSISSLAELVMLGMAII, and FGFLAILSVSSVAGAAWMFCQWL.

This sequence belongs to the ferroportin (FP) (TC 2.A.100) family. SLC40A subfamily.

Its subcellular location is the membrane. It localises to the plastid. The protein resides in the chloroplast envelope. Its function is as follows. May be involved in iron transport and iron homeostasis. The protein is Solute carrier family 40 member 2, chloroplastic of Oryza sativa subsp. japonica (Rice).